The following is a 1481-amino-acid chain: Cystic fibrosis transmembrane conductance regulator (1481 aa).

Residues 1 to 77 lie on the Cytoplasmic side of the membrane; sequence MQRSPLEKAS…KLINALRRCF (77 aa). Residues 78–98 form a helical membrane-spanning segment; sequence FWRFMFYGIILYLGEVTKAVQ. The region spanning 81-365 is the ABC transmembrane type-1 1 domain; that stretch reads FMFYGIILYL…WAVQTWYDSL (285 aa). Over 99–122 the chain is Extracellular; sequence PLLLGRIIASYDPDNEAERSIAIY. A helical transmembrane segment spans residues 123-146; it reads LGIGLCLLFIVRTLLLHPAIFGLH. Over 147–195 the chain is Cytoplasmic; it reads HIGMQMRIAMFSLIYKKTLKLSSRVLDKISIGQLVSLLSNNLNKFDEGL. Residues 196 to 216 form a helical membrane-spanning segment; sequence ALAHFVWIAPLQVTLLMGLLW. At 217 to 222 the chain is on the extracellular side; that stretch reads DLLQAS. A helical membrane pass occupies residues 223-243; sequence AFCGLAFLIVLALFQAGLGRM. At 244–298 the chain is on the cytoplasmic side; sequence MMKYRDQRAGKINERLVITSEMIENIQSVKAYCWEEAMEKMIENLRQTELKLTRK. The chain crosses the membrane as a helical span at residues 299-319; that stretch reads AAYVRYFNSSAFFFSGFFVVF. The Extracellular portion of the chain corresponds to 320 to 339; sequence LSVLPYALIKGIVLRRIFTT. The helical transmembrane segment at 340 to 358 threads the bilayer; sequence ISFCIVLRMAVTRQFPWAV. Over 359-858 the chain is Cytoplasmic; it reads QTWYDSLGAI…YLRYITIHKS (500 aa). ATP contacts are provided by residues Trp401, Ser433, 457-464, and Gln492; that span reads GSTGAGKT. Residues 422–645 form the ABC transporter 1 domain; that stretch reads NGDNSLFFSN…RPDFSSKLMG (224 aa). A lipid anchor (S-palmitoyl cysteine) is attached at Cys523. Phosphoserine is present on residues Ser548 and Ser659. The disordered R region stretch occupies residues 653-831; it reads SAERRNSILT…EEINEDDLKE (179 aa). Ser669 is subject to Phosphoserine; by PKA. A Phosphoserine modification is found at Ser685. Lys687 participates in a covalent cross-link: Glycyl lysine isopeptide (Lys-Gly) (interchain with G-Cter in ubiquitin). Ser699 and Ser711 each carry phosphoserine. Thr716 bears the Phosphothreonine mark. Phosphoserine is present on residues Ser736, Ser767, Ser790, Ser795, and Ser813. A helical transmembrane segment spans residues 859–879; sequence LIFVLIWCLVIFLAEVAASLV. Residues 859-1155 form the ABC transmembrane type-1 2 domain; that stretch reads LIFVLIWCLV…AVNSSIDVDS (297 aa). The Extracellular portion of the chain corresponds to 880 to 918; it reads VLWLLKETPPQDSGNSTKGANNSYAVIITSTSSYYVFYI. N-linked (GlcNAc...) asparagine glycans are attached at residues Asn894 and Asn900. Residues 919-939 traverse the membrane as a discontinuously helical segment; that stretch reads YVGVADTLLALGLFRGLPLVH. At 940–990 the chain is on the cytoplasmic side; sequence TLITVSKILHHKMLHSVLQAPMSTLNTLKAGGILNRFSKDMAILDDLLPLT. A helical transmembrane segment spans residues 991-1011; that stretch reads IFDFIQLLLIVIGAVAVVSVL. Topologically, residues 1012–1013 are extracellular; the sequence is QP. Residues 1014–1034 form a helical membrane-spanning segment; it reads YIFLATVPVIAAFIILRAYFL. Residues 1035–1095 lie on the Cytoplasmic side of the membrane; that stretch reads HTSQQLKQLE…TANWFLYLST (61 aa). The chain crosses the membrane as a helical span at residues 1096–1116; it reads LRWFQMRIEMIFVIFFIAVTF. Topologically, residues 1117–1130 are extracellular; it reads ISILTTGEGEGTVG. A helical transmembrane segment spans residues 1131-1151; it reads IILTLAMNIMSTLQWAVNSSI. The Cytoplasmic portion of the chain corresponds to 1152–1481; it reads DVDSLMRSVS…TEEEVQETRL (330 aa). In terms of domain architecture, ABC transporter 2 spans 1211-1444; sequence MTVKDLTAKY…KSLFQQAISS (234 aa). ATP-binding positions include Tyr1220 and 1245-1252; that span reads GRTGSGKS. The segment at 1387-1481 is interaction with GORASP2; it reads RTLKQAFADC…TEEEVQETRL (95 aa). Residue Cys1396 is the site of S-palmitoyl cysteine attachment. Ser1445 and Ser1457 each carry phosphoserine. Residues 1449 to 1481 form a disordered region; that stretch reads KLFPHRNSSKHKSRSKIAALQEETEEEVQETRL. Basic residues predominate over residues 1451–1463; sequence FPHRNSSKHKSRS. The segment covering 1470–1481 has biased composition (acidic residues); the sequence is EETEEEVQETRL. The short motif at 1479 to 1481 is the PDZ-binding element; it reads TRL.

Belongs to the ABC transporter superfamily. ABCC family. CFTR transporter (TC 3.A.1.202) subfamily. In terms of assembly, monomer; does not require oligomerization for channel activity. May form oligomers in the membrane. Interacts with SLC26A3, SLC26A6 and NHERF1. Interacts with SHANK2. Interacts with MYO6. Interacts (via C-terminus) with GOPC (via PDZ domain); this promotes CFTR internalization and thereby decreases channel activity. Interacts with SLC4A7 through NHERF1. Found in a complex with MYO5B and RAB11A. Interacts with ANO1. Interacts with SLC26A8. Interacts with AHCYL1; the interaction increases CFTR activity. Interacts with CSE1L. The core-glycosylated form interacts with GORASP2 (via PDZ GRASP-type 1 domain) in respone to ER stress. Interacts with MARCHF2; the interaction leads to CFTR ubiqtuitination and degradation. Interacts with ADGRG2. Post-translationally, N-glycosylated. Phosphorylated; cAMP treatment promotes phosphorylation and activates the channel. Dephosphorylation decreases the ATPase activity (in vitro). Phosphorylation at PKA sites activates the channel. Phosphorylation at PKC sites enhances the response to phosphorylation by PKA. Phosphorylated by AMPK; this inhibits channel activity. In terms of processing, ubiquitinated, leading to its degradation in the lysosome. Deubiquitination by USP10 in early endosomes enhances its endocytic recycling to the cell membrane. Ubiquitinated by RNF185 during ER stress. Ubiquitinated by MARCHF2.

It localises to the apical cell membrane. Its subcellular location is the early endosome membrane. The protein localises to the cell membrane. The protein resides in the recycling endosome membrane. It is found in the endoplasmic reticulum membrane. It localises to the nucleus. The enzyme catalyses ATP + H2O + closed Cl(-) channel = ADP + phosphate + open Cl(-) channel.. It catalyses the reaction chloride(in) = chloride(out). It carries out the reaction hydrogencarbonate(in) = hydrogencarbonate(out). The catalysed reaction is ATP + H2O = ADP + phosphate + H(+). Epithelial ion channel that plays an important role in the regulation of epithelial ion and water transport and fluid homeostasis. Mediates the transport of chloride ions across the cell membrane. Possesses an intrinsic ATPase activity and utilizes ATP to gate its channel; the passive flow of anions through the channel is gated by cycles of ATP binding and hydrolysis by the ATP-binding domains. The ion channel is also permeable to HCO(3)(-); selectivity depends on the extracellular chloride concentration. Exerts its function also by modulating the activity of other ion channels and transporters. Contributes to the regulation of the pH and the ion content of the epithelial fluid layer. Modulates the activity of the epithelial sodium channel (ENaC) complex, in part by regulating the cell surface expression of the ENaC complex. May regulate bicarbonate secretion and salvage in epithelial cells by regulating the transporter SLC4A7. Can inhibit the chloride channel activity of ANO1. Plays a role in the chloride and bicarbonate homeostasis during sperm epididymal maturation and capacitation. The protein is Cystic fibrosis transmembrane conductance regulator of Equus caballus (Horse).